The primary structure comprises 340 residues: Phenylalanine--tRNA ligase alpha subunit (340 aa).

Glu-258 contacts Mg(2+).

This sequence belongs to the class-II aminoacyl-tRNA synthetase family. Phe-tRNA synthetase alpha subunit type 1 subfamily. Tetramer of two alpha and two beta subunits. It depends on Mg(2+) as a cofactor.

It is found in the cytoplasm. The catalysed reaction is tRNA(Phe) + L-phenylalanine + ATP = L-phenylalanyl-tRNA(Phe) + AMP + diphosphate + H(+). The sequence is that of Phenylalanine--tRNA ligase alpha subunit from Corynebacterium efficiens (strain DSM 44549 / YS-314 / AJ 12310 / JCM 11189 / NBRC 100395).